The sequence spans 331 residues: ADP-L-glycero-D-manno-heptose-6-epimerase (331 aa).

Residues 11-12 (FI), 32-33 (DN), K39, K54, 75-79 (LGACT), and N92 contribute to the NADP(+) site. Y139 acts as the Proton acceptor in catalysis. K143 serves as a coordination point for NADP(+). N168 provides a ligand contact to substrate. Residues V169 and K177 each contribute to the NADP(+) site. K177 acts as the Proton acceptor in catalysis. Residues R179, Q186, 200-203 (FGEH), H213, and Y292 contribute to the substrate site.

The protein belongs to the NAD(P)-dependent epimerase/dehydratase family. HldD subfamily. In terms of assembly, homopentamer. It depends on NADP(+) as a cofactor.

The catalysed reaction is ADP-D-glycero-beta-D-manno-heptose = ADP-L-glycero-beta-D-manno-heptose. It functions in the pathway nucleotide-sugar biosynthesis; ADP-L-glycero-beta-D-manno-heptose biosynthesis; ADP-L-glycero-beta-D-manno-heptose from D-glycero-beta-D-manno-heptose 7-phosphate: step 4/4. In terms of biological role, catalyzes the interconversion between ADP-D-glycero-beta-D-manno-heptose and ADP-L-glycero-beta-D-manno-heptose via an epimerization at carbon 6 of the heptose. This chain is ADP-L-glycero-D-manno-heptose-6-epimerase, found in Cupriavidus pinatubonensis (strain JMP 134 / LMG 1197) (Cupriavidus necator (strain JMP 134)).